A 376-amino-acid polypeptide reads, in one-letter code: Chaperone protein DnaJ (376 aa).

Residues 5–70 form the J domain; sequence DYYEVLGVGR…DKKAAYDQFG (66 aa). The CR-type zinc finger occupies 132 to 210; it reads GLTKELRIPT…CHGEGRVEKS (79 aa). Zn(2+) contacts are provided by Cys-145, Cys-148, Cys-162, Cys-165, Cys-184, Cys-187, Cys-198, and Cys-201. CXXCXGXG motif repeat units lie at residues 145-152, 162-169, 184-191, and 198-205; these read CDLCDGSG, CGTCHGQG, CPTCHGRG, and CGKCHGEG.

It belongs to the DnaJ family. Homodimer. Zn(2+) serves as cofactor.

It localises to the cytoplasm. Participates actively in the response to hyperosmotic and heat shock by preventing the aggregation of stress-denatured proteins and by disaggregating proteins, also in an autonomous, DnaK-independent fashion. Unfolded proteins bind initially to DnaJ; upon interaction with the DnaJ-bound protein, DnaK hydrolyzes its bound ATP, resulting in the formation of a stable complex. GrpE releases ADP from DnaK; ATP binding to DnaK triggers the release of the substrate protein, thus completing the reaction cycle. Several rounds of ATP-dependent interactions between DnaJ, DnaK and GrpE are required for fully efficient folding. Also involved, together with DnaK and GrpE, in the DNA replication of plasmids through activation of initiation proteins. This chain is Chaperone protein DnaJ, found in Shewanella loihica (strain ATCC BAA-1088 / PV-4).